Consider the following 204-residue polypeptide: Adenylyl-sulfate kinase (204 aa).

ATP is bound at residue 34 to 41 (GLSGSGKS). S108 (phosphoserine intermediate) is an active-site residue.

The protein belongs to the APS kinase family.

The catalysed reaction is adenosine 5'-phosphosulfate + ATP = 3'-phosphoadenylyl sulfate + ADP + H(+). The protein operates within sulfur metabolism; hydrogen sulfide biosynthesis; sulfite from sulfate: step 2/3. In terms of biological role, catalyzes the synthesis of activated sulfate. The sequence is that of Adenylyl-sulfate kinase from Phocaeicola vulgatus (strain ATCC 8482 / DSM 1447 / JCM 5826 / CCUG 4940 / NBRC 14291 / NCTC 11154) (Bacteroides vulgatus).